We begin with the raw amino-acid sequence, 220 residues long: Deoxyribose-phosphate aldolase (220 aa).

Catalysis depends on Asp-89, which acts as the Proton donor/acceptor. The Schiff-base intermediate with acetaldehyde role is filled by Lys-151. The active-site Proton donor/acceptor is Lys-180.

It belongs to the DeoC/FbaB aldolase family. DeoC type 1 subfamily.

It is found in the cytoplasm. The catalysed reaction is 2-deoxy-D-ribose 5-phosphate = D-glyceraldehyde 3-phosphate + acetaldehyde. Its pathway is carbohydrate degradation; 2-deoxy-D-ribose 1-phosphate degradation; D-glyceraldehyde 3-phosphate and acetaldehyde from 2-deoxy-alpha-D-ribose 1-phosphate: step 2/2. In terms of biological role, catalyzes a reversible aldol reaction between acetaldehyde and D-glyceraldehyde 3-phosphate to generate 2-deoxy-D-ribose 5-phosphate. This is Deoxyribose-phosphate aldolase from Streptococcus suis (strain 98HAH33).